A 148-amino-acid polypeptide reads, in one-letter code: 3-dehydroquinate dehydratase 2 (148 aa).

Y24 acts as the Proton acceptor in catalysis. Substrate-binding residues include N75, H81, and D88. Catalysis depends on H101, which acts as the Proton donor. Substrate-binding positions include 102–103 (LS) and R112.

This sequence belongs to the type-II 3-dehydroquinase family. As to quaternary structure, homododecamer.

The catalysed reaction is 3-dehydroquinate = 3-dehydroshikimate + H2O. The protein operates within metabolic intermediate biosynthesis; chorismate biosynthesis; chorismate from D-erythrose 4-phosphate and phosphoenolpyruvate: step 3/7. Its function is as follows. Catalyzes a trans-dehydration via an enolate intermediate. The polypeptide is 3-dehydroquinate dehydratase 2 (aroQ2) (Pseudomonas aeruginosa (strain ATCC 15692 / DSM 22644 / CIP 104116 / JCM 14847 / LMG 12228 / 1C / PRS 101 / PAO1)).